The following is a 239-amino-acid chain: Small ribosomal subunit protein uS5 (239 aa).

Residues Met1 to Gly62 form a disordered region. The segment covering Ala9 to Ala19 has biased composition (low complexity). A compositionally biased stretch (basic and acidic residues) spans Gly34–Gly62. In terms of domain architecture, S5 DRBM spans Leu65–Val128.

Belongs to the universal ribosomal protein uS5 family. Part of the 30S ribosomal subunit. Contacts proteins S4 and S8.

In terms of biological role, with S4 and S12 plays an important role in translational accuracy. Its function is as follows. Located at the back of the 30S subunit body where it stabilizes the conformation of the head with respect to the body. The polypeptide is Small ribosomal subunit protein uS5 (Rhizorhabdus wittichii (strain DSM 6014 / CCUG 31198 / JCM 15750 / NBRC 105917 / EY 4224 / RW1) (Sphingomonas wittichii)).